Consider the following 264-residue polypeptide: MKSNDYTIASLKEKVREMNQAELIDFFEEESRSGALKVKQARVKQIAQETQAIHEYEQMLEYERRYNGKVVCGIDEVGRGPLAGPVIACAVILNDGHHYIGLNDSKQLSKHKRASLYDALTQSVTYAIGAASVEEIDKFNIYEATKLAMHRAIDKLPVKPDVLLIDAMNLNTGLIEESIIKGDAKSVSIAAASVIAKVYRDHLMEEIHEEFPYYDFNRNAGYGTKRHLDGLMQYGITAHHRKSFEPIKSMIKTEENAKTITKPS.

Residues 69 to 263 (KVVCGIDEVG…EENAKTITKP (195 aa)) enclose the RNase H type-2 domain. Aspartate 75, glutamate 76, and aspartate 166 together coordinate a divalent metal cation.

This sequence belongs to the RNase HII family. It depends on Mn(2+) as a cofactor. Mg(2+) is required as a cofactor.

It is found in the cytoplasm. The catalysed reaction is Endonucleolytic cleavage to 5'-phosphomonoester.. In terms of biological role, endonuclease that specifically degrades the RNA of RNA-DNA hybrids. This chain is Ribonuclease HII, found in Macrococcus caseolyticus (strain JCSC5402) (Macrococcoides caseolyticum).